Reading from the N-terminus, the 707-residue chain is Elongation factor G (707 aa).

Residues 9 to 293 form the tr-type G domain; it reads HDVRNIGIMA…GVVDYLPSPE (285 aa). Residues 18-25, 90-94, and 144-147 each bind GTP; these read AHIDAGKT, DTPGH, and NKMD.

Belongs to the TRAFAC class translation factor GTPase superfamily. Classic translation factor GTPase family. EF-G/EF-2 subfamily.

The protein resides in the cytoplasm. Functionally, catalyzes the GTP-dependent ribosomal translocation step during translation elongation. During this step, the ribosome changes from the pre-translocational (PRE) to the post-translocational (POST) state as the newly formed A-site-bound peptidyl-tRNA and P-site-bound deacylated tRNA move to the P and E sites, respectively. Catalyzes the coordinated movement of the two tRNA molecules, the mRNA and conformational changes in the ribosome. In Bifidobacterium longum (strain DJO10A), this protein is Elongation factor G.